Reading from the N-terminus, the 432-residue chain is D-amino acid dehydrogenase (432 aa).

FAD is bound at residue 3–17; the sequence is VLVLGSGVIGTTTAY.

This sequence belongs to the DadA oxidoreductase family. Requires FAD as cofactor.

The catalysed reaction is a D-alpha-amino acid + A + H2O = a 2-oxocarboxylate + AH2 + NH4(+). The protein operates within amino-acid degradation; D-alanine degradation; NH(3) and pyruvate from D-alanine: step 1/1. Functionally, oxidative deamination of D-amino acids. This chain is D-amino acid dehydrogenase, found in Azotobacter vinelandii (strain DJ / ATCC BAA-1303).